A 118-amino-acid polypeptide reads, in one-letter code: Actin depolymerizing factor ADF (118 aa).

The ADF-H domain maps to 4–118 (GMGVDENCVA…HEMGDLAPLA (115 aa)).

Belongs to the actin-binding proteins ADF family. In terms of assembly, interacts with ACT1 (G-actin); the interaction results in inhibition of actin polymerization. Interacts with DPA; the interaction enhances ADF activity in disassembly of filamentous actin and inhibition of actin polymerization.

It is found in the cytoplasm. Inhibits actin polymerization. Promotes actin depolymerization. Strongly sequesters actin monomers (G-actin). Weakly severs actin filaments (F-actin). This is Actin depolymerizing factor ADF from Toxoplasma gondii.